We begin with the raw amino-acid sequence, 562 residues long: MSKDAGGGQMNSNLKTSLSECMEALDLFLSNNFQEALDQLRAKSKDSMYHALTYATMLEMQAMMTFDPQDILNAGNTMKEAQAVCQRYRRKSTVVDSFNSLVHKQSLDQFTEEEIHAEVCYAECLLQRAALTFLQDENMVSFIKGGIKVRNSYQTYKELHSLQQCANYAKGESHCHFEGGVKLGVGAFNLTISMLPTRILRLLEFVGFSGNKDYGLSQLQEGTTVHSFRALLCTLLLLCYHTFLRFVLGTGSGNIEEAEKLLEPYLKRYPKGAIFLFFAGRIEEIKGNIDEAISRFEECCESQQNWKQFHHMCYWQLMWCFTYKQHWKMAYFYADLLSKENSWSKATYMYMKAAYLSMFAEDDCKPFGDDEVQIFRLVPSLKLKIAGKSLPTEKFAIRKSRRYLAQKLVPLPVPPLEMMYIWNGYAVIGKHQDLTEAMLQTLVRAEKSLEGVTASEFLIDDRCVVKLLKGLCYKYLGRIPEAVESFSYIQLNEKRIKYDHYLVPNAMLELALLYLQLEKKEEALRLLENAKNNYKNYSMESRTHFRIQDALQQAKSLPQNGC.

TPR repeat units follow at residues 273-306 (AIFL…QQNW), 463-496 (CVVK…EKRI), and 504-537 (PNAM…YKNY).

The protein belongs to the TTC39 family.

This Xenopus tropicalis (Western clawed frog) protein is Tetratricopeptide repeat protein 39A (ttc39a).